The sequence spans 94 residues: PTS system galactitol-specific EIIB component (94 aa).

A PTS EIIB type-2 domain is found at 1 to 94 (MKRKIIVACG…QNKILTILQG (94 aa)). The Phosphocysteine intermediate; for EIIB activity role is filled by Cys9. Cys9 bears the Phosphocysteine; by EIIA mark.

As to quaternary structure, forms a complex with one each of subunit of GatA, GatB and 2 subunits of GatC.

It is found in the cytoplasm. The catalysed reaction is galactitol(out) + N(pros)-phospho-L-histidyl-[protein] = galactitol 1-phosphate(in) + L-histidyl-[protein]. Functionally, the phosphoenolpyruvate-dependent sugar phosphotransferase system (PTS), a major carbohydrate active transport system, catalyzes the phosphorylation of incoming sugar substrates concomitant with their translocation across the cell membrane. The enzyme II complex composed of GatA, GatB and GatC is involved in galactitol transport. The chain is PTS system galactitol-specific EIIB component (gatB) from Escherichia coli O157:H7.